Here is a 348-residue protein sequence, read N- to C-terminus: tRNA-specific 2-thiouridylase MnmA (348 aa).

ATP is bound by residues 8-15 (LLSGGVDS) and methionine 34. Cysteine 105 acts as the Nucleophile in catalysis. A disulfide bridge connects residues cysteine 105 and cysteine 197. Glycine 129 contributes to the ATP binding site. Positions 147–149 (KDQ) are interaction with tRNA. The active-site Cysteine persulfide intermediate is cysteine 197.

This sequence belongs to the MnmA/TRMU family.

It is found in the cytoplasm. It catalyses the reaction S-sulfanyl-L-cysteinyl-[protein] + uridine(34) in tRNA + AH2 + ATP = 2-thiouridine(34) in tRNA + L-cysteinyl-[protein] + A + AMP + diphosphate + H(+). Functionally, catalyzes the 2-thiolation of uridine at the wobble position (U34) of tRNA, leading to the formation of s(2)U34. The chain is tRNA-specific 2-thiouridylase MnmA from Fervidobacterium nodosum (strain ATCC 35602 / DSM 5306 / Rt17-B1).